Consider the following 516-residue polypeptide: Poly(U)-binding-splicing factor PUF60-B (516 aa).

RRM domains lie at 86–164 (CRVY…RPGS) and 183–261 (NRIY…KAVT). Residues 356-398 (TAPASMGTPTSAVQLHTEVKREEDSRRTAEDHSAPVGNGQDSE) are disordered. Residues 372–388 (TEVKREEDSRRTAEDHS) are compositionally biased toward basic and acidic residues. Residues 419 to 506 (TVMVLRNMVG…RKVVAELYDQ (88 aa)) enclose the RRM 3; atypical domain.

The protein belongs to the RRM half pint family.

The protein resides in the nucleus. In terms of biological role, DNA- and RNA-binding protein, involved in transcription repression and pre-mRNA splicing. This is Poly(U)-binding-splicing factor PUF60-B (puf60b) from Danio rerio (Zebrafish).